The sequence spans 383 residues: L-aspartate/L-glutamate decarboxylase (383 aa).

Lys232 bears the N6-(pyridoxal phosphate)lysine mark.

This sequence belongs to the group II decarboxylase family. MfnA subfamily. As to quaternary structure, monomer. Pyridoxal 5'-phosphate is required as a cofactor.

The catalysed reaction is L-aspartate + H(+) = beta-alanine + CO2. The enzyme catalyses L-glutamate + H(+) = 4-aminobutanoate + CO2. It carries out the reaction L-cysteate + H(+) = taurine + CO2. It catalyses the reaction 3-sulfino-L-alanine + H(+) = hypotaurine + CO2. The protein operates within cofactor biosynthesis; coenzyme A biosynthesis. Functionally, catalyzes the decarboxylation of L-aspartate to produce beta-alanine, and the decarboxylation of L-glutamate to produce 4-aminobutanoate. Can also use cysteate and, to a lesser extent, cysteine sulfite (3-sulfino-L-alanine), but not L-tyrosine. Specific activities toward L-aspartate and cysteate are higher than toward L-glutamate. This chain is L-aspartate/L-glutamate decarboxylase, found in Pyrococcus horikoshii (strain ATCC 700860 / DSM 12428 / JCM 9974 / NBRC 100139 / OT-3).